A 563-amino-acid chain; its full sequence is Ribulokinase (563 aa).

It belongs to the ribulokinase family.

The catalysed reaction is D-ribulose + ATP = D-ribulose 5-phosphate + ADP + H(+). It carries out the reaction L-ribulose + ATP = L-ribulose 5-phosphate + ADP + H(+). It functions in the pathway carbohydrate degradation; L-arabinose degradation via L-ribulose; D-xylulose 5-phosphate from L-arabinose (bacterial route): step 2/3. This Halalkalibacterium halodurans (strain ATCC BAA-125 / DSM 18197 / FERM 7344 / JCM 9153 / C-125) (Bacillus halodurans) protein is Ribulokinase.